The following is a 320-amino-acid chain: GTPase Era (320 aa).

In terms of domain architecture, Era-type G spans 25–193 (HCGFIAIVGR…RKHVRNHLPK (169 aa)). Positions 33-40 (GRPNVGKS) are G1. 33–40 (GRPNVGKS) lines the GTP pocket. The tract at residues 59 to 63 (QTTRH) is G2. The segment at 80 to 83 (DTPG) is G3. GTP is bound by residues 80 to 84 (DTPGL) and 142 to 145 (NKVD). A G4 region spans residues 142-145 (NKVD). The tract at residues 172 to 174 (ISA) is G5. Positions 216 to 302 (VREKLMRFTG…YLETWVKVKS (87 aa)) constitute a KH type-2 domain.

This sequence belongs to the TRAFAC class TrmE-Era-EngA-EngB-Septin-like GTPase superfamily. Era GTPase family. In terms of assembly, monomer.

It is found in the cytoplasm. The protein localises to the cell inner membrane. Its function is as follows. An essential GTPase that binds both GDP and GTP, with rapid nucleotide exchange. Plays a role in 16S rRNA processing and 30S ribosomal subunit biogenesis and possibly also in cell cycle regulation and energy metabolism. The polypeptide is GTPase Era (Vibrio parahaemolyticus serotype O3:K6 (strain RIMD 2210633)).